Consider the following 102-residue polypeptide: Putative pterin-4-alpha-carbinolamine dehydratase (102 aa).

Belongs to the pterin-4-alpha-carbinolamine dehydratase family.

The enzyme catalyses (4aS,6R)-4a-hydroxy-L-erythro-5,6,7,8-tetrahydrobiopterin = (6R)-L-erythro-6,7-dihydrobiopterin + H2O. The sequence is that of Putative pterin-4-alpha-carbinolamine dehydratase from Burkholderia vietnamiensis (strain G4 / LMG 22486) (Burkholderia cepacia (strain R1808)).